Consider the following 136-residue polypeptide: Urease subunit beta (136 aa).

The tract at residues 112–136 is disordered; the sequence is ENDEYAGVFGDNGTENVNKKGGKRS.

This sequence belongs to the urease beta subunit family. As to quaternary structure, heterotrimer of UreA (gamma), UreB (beta) and UreC (alpha) subunits. Three heterotrimers associate to form the active enzyme.

The protein localises to the cytoplasm. The catalysed reaction is urea + 2 H2O + H(+) = hydrogencarbonate + 2 NH4(+). The protein operates within nitrogen metabolism; urea degradation; CO(2) and NH(3) from urea (urease route): step 1/1. The protein is Urease subunit beta of Staphylococcus aureus (strain MRSA252).